The primary structure comprises 299 residues: Epimerase family protein SH2119 (299 aa).

It belongs to the NAD(P)-dependent epimerase/dehydratase family. SDR39U1 subfamily.

This is Epimerase family protein SH2119 from Staphylococcus haemolyticus (strain JCSC1435).